Consider the following 286-residue polypeptide: 3-hydroxyanthranilate 3,4-dioxygenase (286 aa).

The interval 1-160 (MERRVRVKSW…SEQYRTGKPN (160 aa)) is domain A (catalytic). Arginine 43 serves as a coordination point for O2. Histidine 47, glutamate 53, and histidine 91 together coordinate Fe cation. Glutamate 53 provides a ligand contact to substrate. Substrate-binding residues include arginine 95 and glutamate 105. Residues 161–177 (PDQLLKELPFPLNTRSI) form a linker region. The domain B stretch occupies residues 178 to 286 (MKPMSLKAWL…QDPARKKPWW (109 aa)).

This sequence belongs to the 3-HAO family. In terms of assembly, monomer. Fe(2+) serves as cofactor.

It localises to the cytoplasm. It is found in the cytosol. The catalysed reaction is 3-hydroxyanthranilate + O2 = (2Z,4Z)-2-amino-3-carboxymuconate 6-semialdehyde. Its pathway is cofactor biosynthesis; NAD(+) biosynthesis; quinolinate from L-kynurenine: step 3/3. Its function is as follows. Catalyzes the oxidative ring opening of 3-hydroxyanthranilate to 2-amino-3-carboxymuconate semialdehyde, which spontaneously cyclizes to quinolinate. The protein is 3-hydroxyanthranilate 3,4-dioxygenase (Haao) of Mus musculus (Mouse).